A 1268-amino-acid chain; its full sequence is SR-related and CTD-associated factor 8 (1268 aa).

The CID domain occupies 1-139 (MEAVKTFNSE…PLLDMAAGIP (139 aa)). The residue at position 6 (threonine 6) is a Phosphothreonine. Lysine 18 is covalently cross-linked (Glycyl lysine isopeptide (Lys-Gly) (interchain with G-Cter in SUMO1)). The span at 270–283 (GEDSEHSEESKKEM) shows a compositional bias: basic and acidic residues. 3 disordered regions span residues 270-290 (GEDSEHSEESKKEMPTPQLSH), 322-355 (QQQPQKVTPQDSQEGTFGSEHSASPSQGSSQQHF), and 385-469 (EIFE…PVRS). Serine 273 carries the post-translational modification Phosphoserine. Polar residues predominate over residues 327–354 (KVTPQDSQEGTFGSEHSASPSQGSSQQH). Positions 394–443 (VAVRSRSRTHSRSRSRSPRKRRSRSRSGSRKRKHRKRSRSHSREKKRKAS) are enriched in basic residues. A compositionally biased stretch (basic and acidic residues) spans 447–461 (SSERRAREREKERQK). In terms of domain architecture, RRM spans 477-551 (TTLWVGQVDK…KVIKIAWALN (75 aa)). Residue serine 617 is modified to Phosphoserine. Positions 776-807 (QIPSGENTRPVIPSDIPSSAAMLAQPPGASST) are disordered. 3 positions are modified to asymmetric dimethylarginine: arginine 915, arginine 925, and arginine 936. Disordered stretches follow at residues 984–1012 (PGRPSIDNVPNPDKRIPLGNDNIQQEGDR) and 1040–1065 (RLDPREGPGRPPLDARDHFGRPPVDM). Arginine 1071 is subject to Asymmetric dimethylarginine. Residues 1199–1268 (ATSQRKGDNV…VVESTETEGT (70 aa)) are disordered. Residues 1249-1262 (GTVAGVESEAVVES) show a composition bias toward low complexity.

As to quaternary structure, interacts with POLR2A; via C-terminal heptapeptide repeat domain (CTD) phosphorylated at 'Ser-2' and 'Ser-5'. Identified in a complex with CDC5L and other spliceosomal proteins.

The protein localises to the nucleus. It localises to the nucleus matrix. In terms of biological role, anti-terminator protein required to prevent early mRNA termination during transcription. Together with SCAF4, acts by suppressing the use of early, alternative poly(A) sites, thereby preventing the accumulation of non-functional truncated proteins. Mechanistically, associates with the phosphorylated C-terminal heptapeptide repeat domain (CTD) of the largest RNA polymerase II subunit (POLR2A), and subsequently binds nascent RNA upstream of early polyadenylation sites to prevent premature mRNA transcript cleavage and polyadenylation. Independently of SCAF4, also acts as a positive regulator of transcript elongation. The polypeptide is SR-related and CTD-associated factor 8 (Mus musculus (Mouse)).